We begin with the raw amino-acid sequence, 592 residues long: Glutamine--fructose-6-phosphate aminotransferase [isomerizing] (592 aa).

The active-site Nucleophile; for GATase activity is Cys-2. Residues 2-217 (CGIVGYVGRD…DGEIADLTPD (216 aa)) enclose the Glutamine amidotransferase type-2 domain. SIS domains lie at 277-416 (IPFK…EREN) and 441-582 (VAEK…VDQP). The For Fru-6P isomerization activity role is filled by Lys-587.

As to quaternary structure, homodimer.

The protein resides in the cytoplasm. The catalysed reaction is D-fructose 6-phosphate + L-glutamine = D-glucosamine 6-phosphate + L-glutamate. Functionally, catalyzes the first step in hexosamine metabolism, converting fructose-6P into glucosamine-6P using glutamine as a nitrogen source. This is Glutamine--fructose-6-phosphate aminotransferase [isomerizing] from Aquifex aeolicus (strain VF5).